Reading from the N-terminus, the 204-residue chain is Venom allergen 5 (204 aa).

4 disulfides stabilise this stretch: C4-C17, C8-C101, C26-C94, and C170-C187. Residues L45–Y189 form the SCP domain.

Belongs to the CRISP family. Venom allergen 5-like subfamily. As to expression, expressed by the venom gland.

It is found in the secreted. Its function is as follows. May have an ancestral function in the promotion of ovum fertilization by sperm. This chain is Venom allergen 5, found in Vespula flavopilosa (Downy yellowjacket).